We begin with the raw amino-acid sequence, 116 residues long: NADH-ubiquinone oxidoreductase chain 3 (116 aa).

3 consecutive transmembrane segments (helical) span residues 4–24 (FMVMIMLTLTLSSIMALLAFW), 56–76 (FFLVAILFLLFDLEIALLLPS), and 87–107 (FTLLWASLFVLLLTLGLIYEW).

This sequence belongs to the complex I subunit 3 family.

Its subcellular location is the mitochondrion membrane. It carries out the reaction a ubiquinone + NADH + 5 H(+)(in) = a ubiquinol + NAD(+) + 4 H(+)(out). Its function is as follows. Core subunit of the mitochondrial membrane respiratory chain NADH dehydrogenase (Complex I) that is believed to belong to the minimal assembly required for catalysis. Complex I functions in the transfer of electrons from NADH to the respiratory chain. The immediate electron acceptor for the enzyme is believed to be ubiquinone. This Petromyzon marinus (Sea lamprey) protein is NADH-ubiquinone oxidoreductase chain 3 (MT-ND3).